Consider the following 459-residue polypeptide: Exodeoxyribonuclease 7 large subunit (459 aa).

Belongs to the XseA family. Heterooligomer composed of large and small subunits.

The protein localises to the cytoplasm. The catalysed reaction is Exonucleolytic cleavage in either 5'- to 3'- or 3'- to 5'-direction to yield nucleoside 5'-phosphates.. Bidirectionally degrades single-stranded DNA into large acid-insoluble oligonucleotides, which are then degraded further into small acid-soluble oligonucleotides. The sequence is that of Exodeoxyribonuclease 7 large subunit from Pseudomonas fluorescens (strain ATCC BAA-477 / NRRL B-23932 / Pf-5).